The sequence spans 172 residues: Large ribosomal subunit protein uL10 (172 aa).

This sequence belongs to the universal ribosomal protein uL10 family. As to quaternary structure, part of the ribosomal stalk of the 50S ribosomal subunit. The N-terminus interacts with L11 and the large rRNA to form the base of the stalk. The C-terminus forms an elongated spine to which L12 dimers bind in a sequential fashion forming a multimeric L10(L12)X complex.

Functionally, forms part of the ribosomal stalk, playing a central role in the interaction of the ribosome with GTP-bound translation factors. This is Large ribosomal subunit protein uL10 from Afipia carboxidovorans (strain ATCC 49405 / DSM 1227 / KCTC 32145 / OM5) (Oligotropha carboxidovorans).